The sequence spans 244 residues: Lectin (244 aa).

The interval 1 to 20 (TETETTSFSIPKTDQPSSPK) is disordered.

Belongs to the leguminous lectin family. As to quaternary structure, homodimer. In contrast to other Lathyrus lectins which are tetramer of two alpha and two beta chains.

This Lathyrus sphaericus (Spring vetchling) protein is Lectin.